The sequence spans 263 residues: Indole-3-glycerol phosphate synthase (263 aa).

It belongs to the TrpC family.

It catalyses the reaction 1-(2-carboxyphenylamino)-1-deoxy-D-ribulose 5-phosphate + H(+) = (1S,2R)-1-C-(indol-3-yl)glycerol 3-phosphate + CO2 + H2O. It functions in the pathway amino-acid biosynthesis; L-tryptophan biosynthesis; L-tryptophan from chorismate: step 4/5. This chain is Indole-3-glycerol phosphate synthase, found in Sulfurimonas denitrificans (strain ATCC 33889 / DSM 1251) (Thiomicrospira denitrificans (strain ATCC 33889 / DSM 1251)).